The primary structure comprises 437 residues: Beta-1,3-galactosyl-O-glycosyl-glycoprotein beta-1,6-N-acetylglucosaminyltransferase 3 (437 aa).

Topologically, residues 1–12 are cytoplasmic; it reads MTSWQRLCWHYR. The helical; Signal-anchor for type II membrane protein transmembrane segment at 13–30 threads the bilayer; the sequence is LWTLGCYMLLAILALKLS. At 31-437 the chain is on the lumenal side; sequence LRLKCDFDAM…RHKAIYGTEL (407 aa). 4 disulfide bridges follow: cysteine 70-cysteine 227, cysteine 161-cysteine 381, cysteine 182-cysteine 209, and cysteine 390-cysteine 422. N-linked (GlcNAc...) asparagine glycosylation is present at asparagine 288.

This sequence belongs to the glycosyltransferase 14 family. Post-translationally, N-glycosylated.

It is found in the golgi apparatus membrane. The catalysed reaction is a 3-O-[beta-D-galactosyl-(1-&gt;3)-N-acetyl-alpha-D-galactosaminyl]-L-seryl-[protein] + UDP-N-acetyl-alpha-D-glucosamine = 3-O-{beta-D-galactosyl-(1-&gt;3)-[N-acetyl-beta-D-glucosaminyl-(1-&gt;6)]-N-acetyl-alpha-D-galactosaminyl}-L-seryl-[protein] + UDP + H(+). It catalyses the reaction a 3-O-[beta-D-galactosyl-(1-&gt;3)-N-acetyl-alpha-D-galactosaminyl]-L-threonyl-[protein] + UDP-N-acetyl-alpha-D-glucosamine = a 3-O-{beta-D-galactosyl-(1-&gt;3)-[N-acetyl-beta-D-glucosaminyl-(1-&gt;6)]-N-acetyl-alpha-D-galactosaminyl}-L-threonyl-[protein] + UDP + H(+). The enzyme catalyses a beta-D-Gal-(1-&gt;4)-beta-D-GlcNAc-(1-&gt;3)-beta-D-Gal-(1-&gt;4)-beta-D-GlcNAc derivative + UDP-N-acetyl-alpha-D-glucosamine = a beta-D-Gal-(1-&gt;4)-beta-D-GlcNAc-(1-&gt;3)-[beta-D-GlcNAc-(1-&gt;6)]-beta-D-Gal-(1-&gt;4)-N-acetyl-beta-D-glucosaminyl derivative + UDP + H(+). It carries out the reaction 3-O-[N-acetyl-beta-D-glucosaminyl-(1-&gt;3)-N-acetyl-alpha-D-galactosaminyl]-L-seryl-[protein] + UDP-N-acetyl-alpha-D-glucosamine = 3-O-[N-acetyl-beta-D-glucosaminyl-(1-&gt;3)-[N-acetyl-beta-D-glucosaminyl-(1-&gt;6)]-N-acetyl-alpha-D-galactosaminyl]-L-seryl-[protein] + UDP + H(+). The catalysed reaction is a 3-O-[N-acetyl-beta-D-glucosaminyl-(1-&gt;3)-N-acetyl-alpha-D-galactosaminyl]-L-threonyl-[protein] + UDP-N-acetyl-alpha-D-glucosamine = 3-O-[N-acetyl-beta-D-glucosaminyl-(1-&gt;3)-[N-acetyl-beta-D-glucosaminyl-(1-&gt;6)]-N-acetyl-alpha-D-galactosaminyl]-L-threonyl-[protein] + UDP + H(+). Its pathway is protein modification; protein glycosylation. Functionally, glycosyltransferase that can synthesize all known mucin beta 6 N-acetylglucosaminides. Mediates core 2 and core 4 O-glycan branching, 2 important steps in mucin-type biosynthesis. Also has I-branching enzyme activity by converting linear into branched poly-N-acetyllactosaminoglycans, leading to introduce the blood group I antigen during embryonic development. In Mus musculus (Mouse), this protein is Beta-1,3-galactosyl-O-glycosyl-glycoprotein beta-1,6-N-acetylglucosaminyltransferase 3 (Gcnt3).